The chain runs to 401 residues: Methyltransferase cfoC (401 aa).

Position 268 (Asp-268) interacts with S-adenosyl-L-methionine. His-308 acts as the Proton acceptor in catalysis.

This sequence belongs to the class I-like SAM-binding methyltransferase superfamily. Cation-independent O-methyltransferase family.

It participates in secondary metabolite biosynthesis; flavonoid biosynthesis. Methyltransferase; part of the gene cluster that mediates the biosynthesis of chlorflavonin, a fungal flavonoid with acetolactate synthase inhibitory activity. Within the pathway, cfoC is responsible for the methylation at position C8-OH of flavonoid. The pathway begins with the PKS-NRPS hybrid synthetase cfoA that uses benzoic acid or p-hydroxybenzoic acid as a starter unit with four rounds of chain elongation using malonyl-CoA to form the chalcone skeleton. Then, a new type of chalcone isomerase, cfoK, catalyzes the conversion of the chalcone into a flavanone by a histidine-mediated oxa-Michael addition mechanism. The desaturation of flavanone to flavone is catalyzed by a new type of flavone synthase, the flavin mononucleotide (FMN)-dependent oxidoreductase cfoJ. Monooxygenases cfoF, cfoG, and P450 cfoH are responsible for the hydroxylation of the flavonoid skeleton at sites C3, C8, and C2', respectively. Like cfoF, the dehydratase cfoI also plays a role in the hydroxylation of position C3. Methyltransferases cfoB, cfoC, and cfoD then catalyze the methylation of C7-OH, C8-OH, and C3-OH, respectively. Finally, the monooxygenase cfoE is responsible for the chlorination of flavonoid at position C3'. The polypeptide is Methyltransferase cfoC (Aspergillus candidus).